Reading from the N-terminus, the 338-residue chain is Ribosomal RNA small subunit methyltransferase H (338 aa).

S-adenosyl-L-methionine-binding positions include 53-55, Asp72, Tyr99, Asp123, and Gln130; that span reads GGH. Positions 277–298 are disordered; it reads ITPRSKSKSPEGLPVELPGMGP.

It belongs to the methyltransferase superfamily. RsmH family.

It localises to the cytoplasm. The catalysed reaction is cytidine(1402) in 16S rRNA + S-adenosyl-L-methionine = N(4)-methylcytidine(1402) in 16S rRNA + S-adenosyl-L-homocysteine + H(+). In terms of biological role, specifically methylates the N4 position of cytidine in position 1402 (C1402) of 16S rRNA. The protein is Ribosomal RNA small subunit methyltransferase H of Rhodococcus opacus (strain B4).